Consider the following 730-residue polypeptide: Ribosomal RNA large subunit methyltransferase K/L (730 aa).

In terms of domain architecture, THUMP spans 46–157; that stretch reads TAYRLCVWSR…RGEAILSLDL (112 aa). The tract at residues 395–418 is disordered; the sequence is ERREAQPEGTEVRQQAPQASEPAR.

The protein belongs to the methyltransferase superfamily. RlmKL family.

The protein resides in the cytoplasm. It catalyses the reaction guanosine(2445) in 23S rRNA + S-adenosyl-L-methionine = N(2)-methylguanosine(2445) in 23S rRNA + S-adenosyl-L-homocysteine + H(+). It carries out the reaction guanosine(2069) in 23S rRNA + S-adenosyl-L-methionine = N(2)-methylguanosine(2069) in 23S rRNA + S-adenosyl-L-homocysteine + H(+). In terms of biological role, specifically methylates the guanine in position 2445 (m2G2445) and the guanine in position 2069 (m7G2069) of 23S rRNA. In Pseudomonas putida (strain GB-1), this protein is Ribosomal RNA large subunit methyltransferase K/L.